We begin with the raw amino-acid sequence, 75 residues long: MKALIESIVASLVDYPEEIVINKTEEESKVVYHLTVHPDDVGKVIGKNGRIAKAIRTVVYASKTDGNKRIYLDIM.

The KH domain maps to 29–75 (KVVYHLTVHPDDVGKVIGKNGRIAKAIRTVVYASKTDGNKRIYLDIM).

The protein belongs to the KhpA RNA-binding protein family. As to quaternary structure, forms a complex with KhpB.

It localises to the cytoplasm. In terms of biological role, a probable RNA chaperone. Forms a complex with KhpB which binds to cellular RNA and controls its expression. Plays a role in peptidoglycan (PG) homeostasis and cell length regulation. This Oceanobacillus iheyensis (strain DSM 14371 / CIP 107618 / JCM 11309 / KCTC 3954 / HTE831) protein is RNA-binding protein KhpA.